Here is a 285-residue protein sequence, read N- to C-terminus: Catechol-2,3-dioxygenase (285 aa).

2 consecutive VOC domains span residues 9-126 and 169-285; these read HIGY…MYAD and IIGH…TFVI. Fe cation-binding residues include H213 and E264.

Belongs to the extradiol ring-cleavage dioxygenase family. Fe(2+) is required as a cofactor.

The enzyme catalyses catechol + O2 = (2Z,4E)-2-hydroxy-6-oxohexa-2,4-dienoate + H(+). Its function is as follows. Involved in the meta cleavage of catechol to 2-hydroxymuconic semialdehyde. Essential for growth and viability in the presence of catechol and probably involved in the detoxification of catechol. The chain is Catechol-2,3-dioxygenase (catE) from Bacillus subtilis (strain 168).